A 350-amino-acid chain; its full sequence is RNA 3'-terminal phosphate cyclase (350 aa).

ATP-binding positions include glutamine 107 and 290 to 294; that span reads FLGDQ. Histidine 316 serves as the catalytic Tele-AMP-histidine intermediate.

Belongs to the RNA 3'-terminal cyclase family. Type 1 subfamily.

Its subcellular location is the cytoplasm. The catalysed reaction is a 3'-end 3'-phospho-ribonucleotide-RNA + ATP = a 3'-end 2',3'-cyclophospho-ribonucleotide-RNA + AMP + diphosphate. In terms of biological role, catalyzes the conversion of 3'-phosphate to a 2',3'-cyclic phosphodiester at the end of RNA. The mechanism of action of the enzyme occurs in 3 steps: (A) adenylation of the enzyme by ATP; (B) transfer of adenylate to an RNA-N3'P to produce RNA-N3'PP5'A; (C) and attack of the adjacent 2'-hydroxyl on the 3'-phosphorus in the diester linkage to produce the cyclic end product. The biological role of this enzyme is unknown but it is likely to function in some aspects of cellular RNA processing. This Gloeothece citriformis (strain PCC 7424) (Cyanothece sp. (strain PCC 7424)) protein is RNA 3'-terminal phosphate cyclase.